The following is a 126-amino-acid chain: Iron-sulfur cluster insertion protein ErpA (126 aa).

The segment at 1–21 is disordered; sequence MNQPANQFNPSSSQPVDPTVL. The iron-sulfur cluster site is built by Cys54, Cys118, and Cys120.

The protein belongs to the HesB/IscA family. Homodimer. Iron-sulfur cluster is required as a cofactor.

Functionally, required for insertion of 4Fe-4S clusters for at least IspG. This is Iron-sulfur cluster insertion protein ErpA from Psychrobacter arcticus (strain DSM 17307 / VKM B-2377 / 273-4).